Consider the following 264-residue polypeptide: Phycocyanobilin:ferredoxin oxidoreductase (264 aa).

Belongs to the HY2 family.

The catalysed reaction is (2R,3Z)-phycocyanobilin + 4 oxidized [2Fe-2S]-[ferredoxin] = biliverdin IXalpha + 4 reduced [2Fe-2S]-[ferredoxin] + 4 H(+). Its function is as follows. Catalyzes the four-electron reduction of biliverdin IX-alpha (2-electron reduction at both the A and D rings); the reaction proceeds via an isolatable 2-electron intermediate, 181,182-dihydrobiliverdin. The polypeptide is Phycocyanobilin:ferredoxin oxidoreductase (pcyA) (Prochlorococcus marinus (strain MIT 9313)).